A 131-amino-acid chain; its full sequence is Glycine cleavage system H protein (131 aa).

The Lipoyl-binding domain occupies isoleucine 24–arginine 106. An N6-lipoyllysine modification is found at lysine 65.

Belongs to the GcvH family. As to quaternary structure, the glycine cleavage system is composed of four proteins: P, T, L and H. (R)-lipoate serves as cofactor.

Functionally, the glycine cleavage system catalyzes the degradation of glycine. The H protein shuttles the methylamine group of glycine from the P protein to the T protein. The polypeptide is Glycine cleavage system H protein (Gloeothece citriformis (strain PCC 7424) (Cyanothece sp. (strain PCC 7424))).